The sequence spans 419 residues: Histidine--tRNA ligase (419 aa).

This sequence belongs to the class-II aminoacyl-tRNA synthetase family. Homodimer.

The protein localises to the cytoplasm. It carries out the reaction tRNA(His) + L-histidine + ATP = L-histidyl-tRNA(His) + AMP + diphosphate + H(+). This Synechococcus sp. (strain JA-3-3Ab) (Cyanobacteria bacterium Yellowstone A-Prime) protein is Histidine--tRNA ligase.